Reading from the N-terminus, the 353-residue chain is Methionine import ATP-binding protein MetN (353 aa).

Residues 11-251 (ITFDRVEKSF…PEHPTTRSFL (241 aa)) enclose the ABC transporter domain. 48 to 55 (GRSGAGKS) serves as a coordination point for ATP.

It belongs to the ABC transporter superfamily. Methionine importer (TC 3.A.1.24) family. The complex is composed of two ATP-binding proteins (MetN), two transmembrane proteins (MetI) and a solute-binding protein (MetQ).

The protein resides in the cell inner membrane. It catalyses the reaction L-methionine(out) + ATP + H2O = L-methionine(in) + ADP + phosphate + H(+). The enzyme catalyses D-methionine(out) + ATP + H2O = D-methionine(in) + ADP + phosphate + H(+). In terms of biological role, part of the ABC transporter complex MetNIQ involved in methionine import. Responsible for energy coupling to the transport system. The chain is Methionine import ATP-binding protein MetN from Cereibacter sphaeroides (strain ATCC 17023 / DSM 158 / JCM 6121 / CCUG 31486 / LMG 2827 / NBRC 12203 / NCIMB 8253 / ATH 2.4.1.) (Rhodobacter sphaeroides).